The following is a 669-amino-acid chain: MSKEIAKKRIEELRDLLNTFNYQYHVLDNPSVSDAEYDRNMQELIKLEAENPEFMSEDSPSVRVGGTVLDIFEKVTHKSPMLSLGNAFNEGDLRDFDRRVRQGIDDVNVRYICELKIDGLAVSLHYEKGRFIQGATRGDGVTGEDITQNLKTIKAIPLRLNEEVTLEARGEAYMPKRSFVKLNEEKEQNGEDVFANPRNAAAGSIRQLDPKIAAKRNLSMFVYGLANVEEKTILSHSESLDFLGELGFKTNPNRRTCETIEEVIAYVEEWQEKRPHLDYEIDGIVIKVDDVALQESLGTTAKSPRWAIAYKFPAEEVVTRLTGIELSVGRTGVVTPTAELEPVRVAGTIVRRASLHNEDLIREKDIRIGDYVVVKKAGDIIPEVVNVIFDKRTGEEEEYHMPTHCPACESELVRLEEEVALRCINPTCPAQIREGLIHFVSRNAMNIDGLGERVITQLFEADYIRTFADLYSLTKEQLLQLERFGEKSATNLVKAIENSKENSLERLLFGLGIRHVGAKAARTFAEHFETMDALVKATEEELKAINEIGEKMAQSVVTYFDNEDVLELLQQFKEYGVNMTYKGMKIADLQNVESYFAGKTVVLTGKLEVMGRSEAKKKIEALGGKVTGSVSKSTDLVVAGEAAGSKLAQAEKHNVEVWNEERFLQELNK.

NAD(+)-binding positions include 34–38 (DAEYD), 83–84 (SL), and Glu-114. Catalysis depends on Lys-116, which acts as the N6-AMP-lysine intermediate. Arg-137, Glu-171, Lys-287, and Lys-311 together coordinate NAD(+). Residues Cys-405, Cys-408, Cys-423, and Cys-428 each coordinate Zn(2+). Positions 591-669 (NVESYFAGKT…EERFLQELNK (79 aa)) constitute a BRCT domain.

Belongs to the NAD-dependent DNA ligase family. LigA subfamily. Mg(2+) is required as a cofactor. Requires Mn(2+) as cofactor.

The enzyme catalyses NAD(+) + (deoxyribonucleotide)n-3'-hydroxyl + 5'-phospho-(deoxyribonucleotide)m = (deoxyribonucleotide)n+m + AMP + beta-nicotinamide D-nucleotide.. DNA ligase that catalyzes the formation of phosphodiester linkages between 5'-phosphoryl and 3'-hydroxyl groups in double-stranded DNA using NAD as a coenzyme and as the energy source for the reaction. It is essential for DNA replication and repair of damaged DNA. In Bacillus cereus (strain ATCC 10987 / NRS 248), this protein is DNA ligase.